The chain runs to 276 residues: Checkpoint protein HUS1B (276 aa).

It belongs to the HUS1 family. Interacts with RAD1 and RAD9B.

In Mus musculus (Mouse), this protein is Checkpoint protein HUS1B (Hus1b).